The sequence spans 491 residues: Ketol-acid reductoisomerase (NADP(+)) (491 aa).

The KARI N-terminal Rossmann domain occupies 15 to 208 (AQLGKCRFMG…GGHRAGVLES (194 aa)). Residues 45–48 (CGAQ), arginine 68, arginine 76, serine 78, and 108–110 (DKQ) each bind NADP(+). Histidine 132 is a catalytic residue. Residue glycine 158 participates in NADP(+) binding. 2 KARI C-terminal knotted domains span residues 209–344 (SFVA…TAPQ) and 345–484 (YEGK…MTDM). Aspartate 217, glutamate 221, glutamate 389, and glutamate 393 together coordinate Mg(2+). Serine 414 is a substrate binding site.

The protein belongs to the ketol-acid reductoisomerase family. Requires Mg(2+) as cofactor.

The enzyme catalyses (2R)-2,3-dihydroxy-3-methylbutanoate + NADP(+) = (2S)-2-acetolactate + NADPH + H(+). It carries out the reaction (2R,3R)-2,3-dihydroxy-3-methylpentanoate + NADP(+) = (S)-2-ethyl-2-hydroxy-3-oxobutanoate + NADPH + H(+). The protein operates within amino-acid biosynthesis; L-isoleucine biosynthesis; L-isoleucine from 2-oxobutanoate: step 2/4. It functions in the pathway amino-acid biosynthesis; L-valine biosynthesis; L-valine from pyruvate: step 2/4. Its function is as follows. Involved in the biosynthesis of branched-chain amino acids (BCAA). Catalyzes an alkyl-migration followed by a ketol-acid reduction of (S)-2-acetolactate (S2AL) to yield (R)-2,3-dihydroxy-isovalerate. In the isomerase reaction, S2AL is rearranged via a Mg-dependent methyl migration to produce 3-hydroxy-3-methyl-2-ketobutyrate (HMKB). In the reductase reaction, this 2-ketoacid undergoes a metal-dependent reduction by NADPH to yield (R)-2,3-dihydroxy-isovalerate. This chain is Ketol-acid reductoisomerase (NADP(+)), found in Escherichia coli O8 (strain IAI1).